The sequence spans 173 residues: UPF0102 protein Psyc_1908 (173 aa).

Belongs to the UPF0102 family.

This chain is UPF0102 protein Psyc_1908, found in Psychrobacter arcticus (strain DSM 17307 / VKM B-2377 / 273-4).